Consider the following 279-residue polypeptide: MTQFDKQYNSIIKDIINNGISDEEFDVRTKWDSDGTPAHTLSVMSKQMRFDNSEVPILTTKKVAWKTAIKELLWIWQLKSNDVNDLNKMGVHIWDQWKQEDGTIGHAYGFQLGKKNRSLNGEKVDQVDYLLHQLKNNPSSRRHITMLWNPDDLDAMSLTPCVYETQWYVKHGKLHLEVRARSNDMALGNPFNVFQYNVLQRMIAQVTGYELGEYIFNIGDCHVYTRHIDNLKIQMEREQFEAPELWINPEVKDFYNFTIDDFKLINYKHGDKLLFEVAV.

141–142 (RR) contributes to the dUMP binding site. Cysteine 161 functions as the Nucleophile in the catalytic mechanism. DUMP-binding positions include 181 to 184 (RSND), asparagine 192, and 222 to 224 (HVY). Aspartate 184 lines the (6R)-5,10-methylene-5,6,7,8-tetrahydrofolate pocket. Alanine 278 is a binding site for (6R)-5,10-methylene-5,6,7,8-tetrahydrofolate.

The protein belongs to the thymidylate synthase family. Bacterial-type ThyA subfamily. In terms of assembly, homodimer.

It is found in the cytoplasm. It carries out the reaction dUMP + (6R)-5,10-methylene-5,6,7,8-tetrahydrofolate = 7,8-dihydrofolate + dTMP. It functions in the pathway pyrimidine metabolism; dTTP biosynthesis. Functionally, catalyzes the reductive methylation of 2'-deoxyuridine-5'-monophosphate (dUMP) to 2'-deoxythymidine-5'-monophosphate (dTMP) while utilizing 5,10-methylenetetrahydrofolate (mTHF) as the methyl donor and reductant in the reaction, yielding dihydrofolate (DHF) as a by-product. This enzymatic reaction provides an intracellular de novo source of dTMP, an essential precursor for DNA biosynthesis. In Bacillus subtilis subsp. natto, this protein is Thymidylate synthase.